The sequence spans 310 residues: Keratin, type II cytoskeletal 8 (310 aa).

The segment at 1-38 is disordered; that stretch reads QRTLKVSSSGPRSFSSRSFSSGPSSRISSSSYSRVGSN. Residue K5 forms a Glycyl lysine isopeptide (Lys-Gly) (interchain with G-Cter in SUMO2) linkage. S7, S9, S15, and S16 each carry phosphoserine. Over residues 7–38 the composition is skewed to low complexity; it reads SSSGPRSFSSRSFSSGPSSRISSSSYSRVGSN. Omega-N-methylarginine is present on R17. Phosphoserine occurs at positions 18, 21, and 25. R26 bears the Omega-N-methylarginine mark. S28, S31, and S33 each carry phosphoserine. The residue at position 34 (R34) is an Omega-N-methylarginine. A Phosphoserine modification is found at S37. The residue at position 42 (R42) is an Asymmetric dimethylarginine; alternate. Omega-N-methylarginine; alternate is present on R42. Residues 92-127 are coil 1A; sequence EKEQIKTLNNKFASFIDKVRFLEQQNKILETKWSFL. The 219-residue stretch at 92–310 folds into the IF rod domain; the sequence is EKEQIKTLNN…LRHTKTEISE (219 aa). K102 is modified (N6-malonyllysine). Glycyl lysine isopeptide (Lys-Gly) (interchain with G-Cter in SUMO2) cross-links involve residues K123 and K131. The interval 128-144 is linker 1; sequence QQQKTSQSNLDGLFEKY. The interval 145-236 is coil 1B; it reads ITNLRRQLDS…HLYEEEIKEM (92 aa). K198 participates in a covalent cross-link: Glycyl lysine isopeptide (Lys-Gly) (interchain with G-Cter in SUMO1); alternate. A Glycyl lysine isopeptide (Lys-Gly) (interchain with G-Cter in SUMO2); alternate cross-link involves residue K198. K208 is modified (N6-acetyllysine). Y229 carries the post-translational modification Phosphotyrosine. Residues 237 to 260 are linker 12; sequence QSQISDTSVVVSMDNSRSLDLDGI. Residues S254 and S275 each carry the phosphoserine modification. A coil 2 region spans residues 261 to 310; that stretch reads IADVRAQYEEIANRSRAEAETMYQIKYEELQLLAGKHGDDLRHTKTEISE. K286 participates in a covalent cross-link: Glycyl lysine isopeptide (Lys-Gly) (interchain with G-Cter in SUMO2). K296 participates in a covalent cross-link: Glycyl lysine isopeptide (Lys-Gly) (interchain with G-Cter in SUMO2); alternate. K296 bears the N6-acetyllysine; alternate mark. Residue K305 forms a Glycyl lysine isopeptide (Lys-Gly) (interchain with G-Cter in SUMO2) linkage.

It belongs to the intermediate filament family. Heterotetramer of two type I and two type II keratins. Forms a heterodimer with KRT18. Associates with KRT20. Interacts with PNN. When associated with KRT19, interacts with DMD. Interacts with APEX1. Interacts with GPER1. Interacts with EPPK1. Interacts with PKP1 and PKP2. In terms of processing, O-glycosylated. O-GlcNAcylation at multiple sites increases solubility, and decreases stability by inducing proteasomal degradation. Post-translationally, O-glycosylated (O-GlcNAcylated), in a cell cycle-dependent manner.

Its subcellular location is the cytoplasm. The protein localises to the nucleus. The protein resides in the nucleoplasm. It is found in the nucleus matrix. Together with KRT19, helps to link the contractile apparatus to dystrophin at the costameres of striated muscle. The sequence is that of Keratin, type II cytoskeletal 8 from Potorous tridactylus (Potoroo).